The sequence spans 207 residues: NAD(P)H-quinone oxidoreductase subunit K, chloroplastic (207 aa).

Positions 47, 48, 112, and 143 each coordinate [4Fe-4S] cluster.

This sequence belongs to the complex I 20 kDa subunit family. In terms of assembly, NDH is composed of at least 16 different subunits, 5 of which are encoded in the nucleus. Requires [4Fe-4S] cluster as cofactor.

The protein resides in the plastid. It is found in the chloroplast thylakoid membrane. The enzyme catalyses a plastoquinone + NADH + (n+1) H(+)(in) = a plastoquinol + NAD(+) + n H(+)(out). It carries out the reaction a plastoquinone + NADPH + (n+1) H(+)(in) = a plastoquinol + NADP(+) + n H(+)(out). Its function is as follows. NDH shuttles electrons from NAD(P)H:plastoquinone, via FMN and iron-sulfur (Fe-S) centers, to quinones in the photosynthetic chain and possibly in a chloroplast respiratory chain. The immediate electron acceptor for the enzyme in this species is believed to be plastoquinone. Couples the redox reaction to proton translocation, and thus conserves the redox energy in a proton gradient. This chain is NAD(P)H-quinone oxidoreductase subunit K, chloroplastic, found in Psilotum nudum (Whisk fern).